The following is a 192-amino-acid chain: Probable nicotinate-nucleotide adenylyltransferase (192 aa).

This sequence belongs to the NadD family.

It carries out the reaction nicotinate beta-D-ribonucleotide + ATP + H(+) = deamido-NAD(+) + diphosphate. It functions in the pathway cofactor biosynthesis; NAD(+) biosynthesis; deamido-NAD(+) from nicotinate D-ribonucleotide: step 1/1. Its function is as follows. Catalyzes the reversible adenylation of nicotinate mononucleotide (NaMN) to nicotinic acid adenine dinucleotide (NaAD). The protein is Probable nicotinate-nucleotide adenylyltransferase of Rhizobium leguminosarum bv. trifolii (strain WSM2304).